Here is a 113-residue protein sequence, read N- to C-terminus: T cell receptor alpha variable 12-2 (113 aa).

Residues 1–20 (MKSLRVLLVILWLQLSWVWS) form the signal peptide. The Ig-like domain occupies 23–113 (KEVEQNSGPL…DSATYLCAVN (91 aa)). N-linked (GlcNAc...) asparagine glycosylation occurs at Asn43. Residues Cys44 and Cys110 are joined by a disulfide bond.

Alpha-beta TR is a heterodimer composed of an alpha and beta chain; disulfide-linked. The alpha-beta TR is associated with the transmembrane signaling CD3 coreceptor proteins to form the TR-CD3 (TcR or TCR). The assembly of alpha-beta TR heterodimers with CD3 occurs in the endoplasmic reticulum where a single alpha-beta TR heterodimer associates with one CD3D-CD3E heterodimer, one CD3G-CD3E heterodimer and one CD247 homodimer forming a stable octameric structure. CD3D-CD3E and CD3G-CD3E heterodimers preferentially associate with TR alpha and TR beta chains, respectively. The association of the CD247 homodimer is the last step of TcR assembly in the endoplasmic reticulum and is required for transport to the cell surface.

The protein localises to the cell membrane. V region of the variable domain of T cell receptor (TR) alpha chain that participates in the antigen recognition. Alpha-beta T cell receptors are antigen specific receptors which are essential to the immune response and are present on the cell surface of T lymphocytes. Recognize peptide-major histocompatibility (MH) (pMH) complexes that are displayed by antigen presenting cells (APC), a prerequisite for efficient T cell adaptive immunity against pathogens. Binding of alpha-beta TR to pMH complex initiates TR-CD3 clustering on the cell surface and intracellular activation of LCK that phosphorylates the ITAM motifs of CD3G, CD3D, CD3E and CD247 enabling the recruitment of ZAP70. In turn ZAP70 phosphorylates LAT, which recruits numerous signaling molecules to form the LAT signalosome. The LAT signalosome propagates signal branching to three major signaling pathways, the calcium, the mitogen-activated protein kinase (MAPK) kinase and the nuclear factor NF-kappa-B (NF-kB) pathways, leading to the mobilization of transcription factors that are critical for gene expression and essential for T cell growth and differentiation. The T cell repertoire is generated in the thymus, by V-(D)-J rearrangement. This repertoire is then shaped by intrathymic selection events to generate a peripheral T cell pool of self-MH restricted, non-autoaggressive T cells. Post-thymic interaction of alpha-beta TR with the pMH complexes shapes TR structural and functional avidity. The chain is T cell receptor alpha variable 12-2 from Homo sapiens (Human).